We begin with the raw amino-acid sequence, 340 residues long: Photosystem II protein D1 (340 aa).

3 consecutive transmembrane segments (helical) span residues 25–42, 114–129, and 138–152; these read YIGWFGLLVFPLLSLATV, HFFLGVCGWMGREWEF, and WIFVAFSAPIAAAAA. A chlorophyll a-binding site is contributed by His-114. Trp-122 lines the pheophytin a pocket. Asp-166 and Glu-185 together coordinate [CaMn4O5] cluster. Residues 193 to 214 form a helical membrane-spanning segment; sequence FHILGVAGVFGGSLFSAMHGSL. His-194 provides a ligand contact to chlorophyll a. A quinone-binding positions include His-211 and 260–261; that span reads SF. His-211 provides a ligand contact to Fe cation. His-268 is a Fe cation binding site. A helical transmembrane segment spans residues 270–284; sequence FLAAWPVIGIWFTSL. 4 residues coordinate [CaMn4O5] cluster: His-328, Glu-329, Asp-338, and Ala-340.

The protein belongs to the reaction center PufL/M/PsbA/D family. PSII is composed of 1 copy each of membrane proteins PsbA, PsbB, PsbC, PsbD, PsbE, PsbF, PsbH, PsbI, PsbJ, PsbK, PsbL, PsbM, PsbT, PsbX, PsbY, PsbZ, Psb30/Ycf12, at least 3 peripheral proteins of the oxygen-evolving complex and a large number of cofactors. It forms dimeric complexes. The cofactor is The D1/D2 heterodimer binds P680, chlorophylls that are the primary electron donor of PSII, and subsequent electron acceptors. It shares a non-heme iron and each subunit binds pheophytin, quinone, additional chlorophylls, carotenoids and lipids. D1 provides most of the ligands for the Mn4-Ca-O5 cluster of the oxygen-evolving complex (OEC). There is also a Cl(-1) ion associated with D1 and D2, which is required for oxygen evolution. The PSII complex binds additional chlorophylls, carotenoids and specific lipids.. In terms of processing, tyr-157 forms a radical intermediate that is referred to as redox-active TyrZ, YZ or Y-Z.

The protein resides in the plastid. The protein localises to the chloroplast thylakoid membrane. It carries out the reaction 2 a plastoquinone + 4 hnu + 2 H2O = 2 a plastoquinol + O2. Its function is as follows. Photosystem II (PSII) is a light-driven water:plastoquinone oxidoreductase that uses light energy to abstract electrons from H(2)O, generating O(2) and a proton gradient subsequently used for ATP formation. It consists of a core antenna complex that captures photons, and an electron transfer chain that converts photonic excitation into a charge separation. The D1/D2 (PsbA/PsbD) reaction center heterodimer binds P680, the primary electron donor of PSII as well as several subsequent electron acceptors. The chain is Photosystem II protein D1 from Amphidinium operculatum (Dinoflagellate).